Reading from the N-terminus, the 512-residue chain is MTAPWVALALLWGSLCAGSGRGEAETRECIYYNANWELERTNQSGLERCEGEQDKRLHCYASWRNSSGTIELVKKGCWLDDFNCYDRQECVATEENPQVYFCCCEGNFCNERFTHLPEAGGPEVTYEPPPTAPTLLTVLAYSLLPIGGLSLIVLLAFWMYRHRKPPYGHVDIHEDPGPPPPSPLVGLKPLQLLEIKARGRFGCVWKAQLMNDFVAVKIFPLQDKQSWQSEREIFSTPGMKHENLLQFIAAEKRGSNLEVELWLITAFHDKGSLTDYLKGNIITWNELCHVAETMSRGLSYLHEDVPWCRGEGHKPSIAHRDFKSKNVLLKSDLTAVLADFGLAVRFEPGKPPGDTHGQVGTRRYMAPEVLEGAINFQRDAFLRIDMYAMGLVLWELVSRCKAADGPVDEYMLPFEEEIGQHPSLEELQEVVVHKKMRPTIKDHWLKHPGLAQLCVTIEECWDHDAEARLSAGCVEERVSLIRRSVNGTTSDCLVSLVTSVTNVDLPPKESSI.

An N-terminal signal peptide occupies residues Met-1 to Gly-18. Topologically, residues Ser-19 to Thr-137 are extracellular. 5 disulfide bridges follow: Cys-29-Cys-59, Cys-49-Cys-77, Cys-84-Cys-103, Cys-90-Cys-102, and Cys-104-Cys-109. N-linked (GlcNAc...) asparagine glycosylation is found at Asn-42 and Asn-65. Residues Val-138–Trp-158 form a helical membrane-spanning segment. The Cytoplasmic portion of the chain corresponds to Met-159–Ile-512. Residues Leu-190 to Leu-480 enclose the Protein kinase domain. Residues Lys-196 to Val-204 and Lys-217 each bind ATP. The Proton acceptor role is filled by Asp-321. An interaction with DYNLT1 region spans residues Asp-491–Ile-512.

This sequence belongs to the protein kinase superfamily. TKL Ser/Thr protein kinase family. TGFB receptor subfamily. In terms of assembly, forms an activin receptor complex with activin type II receptors such as ACVR1B. Interacts with VPS39. Interacts with DYNLT1. Interacts with BMP3. Interacts with BMP2. Interacts with BMP6. The cofactor is Mg(2+). It depends on Mn(2+) as a cofactor. In terms of processing, phosphorylated. Constitutive phosphorylation is in part catalyzed by its own kinase activity.

The protein localises to the cell membrane. The enzyme catalyses L-threonyl-[receptor-protein] + ATP = O-phospho-L-threonyl-[receptor-protein] + ADP + H(+). The catalysed reaction is L-seryl-[receptor-protein] + ATP = O-phospho-L-seryl-[receptor-protein] + ADP + H(+). In terms of biological role, transmembrane serine/threonine kinase activin type-2 receptor forming an activin receptor complex with activin type-1 serine/threonine kinase receptors (ACVR1, ACVR1B or ACVR1c). Transduces the activin signal from the cell surface to the cytoplasm and is thus regulating many physiological and pathological processes including neuronal differentiation and neuronal survival, hair follicle development and cycling, FSH production by the pituitary gland, wound healing, extracellular matrix production, immunosuppression and carcinogenesis. Activin is also thought to have a paracrine or autocrine role in follicular development in the ovary. Within the receptor complex, the type-2 receptors act as a primary activin receptors (binds activin-A/INHBA, activin-B/INHBB as well as inhibin-A/INHA-INHBA). The type-1 receptors like ACVR1B act as downstream transducers of activin signals. Activin binds to type-2 receptor at the plasma membrane and activates its serine-threonine kinase. The activated receptor type-2 then phosphorylates and activates the type-1 receptor. Once activated, the type-1 receptor binds and phosphorylates the SMAD proteins SMAD2 and SMAD3, on serine residues of the C-terminal tail. Soon after their association with the activin receptor and subsequent phosphorylation, SMAD2 and SMAD3 are released into the cytoplasm where they interact with the common partner SMAD4. This SMAD complex translocates into the nucleus where it mediates activin-induced transcription. Inhibitory SMAD7, which is recruited to ACVR1B through FKBP1A, can prevent the association of SMAD2 and SMAD3 with the activin receptor complex, thereby blocking the activin signal. Activin signal transduction is also antagonized by the binding to the receptor of inhibin-B via the IGSF1 inhibin coreceptor. The sequence is that of Activin receptor type-2B (ACVR2B) from Homo sapiens (Human).